Consider the following 398-residue polypeptide: Putative isocitrate lyase subunit B (398 aa).

Belongs to the isocitrate lyase/PEP mutase superfamily. Isocitrate lyase family. Mg(2+) is required as a cofactor.

The catalysed reaction is D-threo-isocitrate = glyoxylate + succinate. Functionally, together with AceAa, they could catalyze the formation of succinate and glyoxylate from isocitrate. The protein is Putative isocitrate lyase subunit B (aceAb) of Mycobacterium tuberculosis (strain ATCC 25618 / H37Rv).